Consider the following 430-residue polypeptide: MHVRSLRAAAPHSFVALWAPLFLLRSALADFSLDNEVHSSFIHRRLRSQERREMQREILSILGLPHRPRPHLQGKHNSAPMFMLDLYNAMAVEESGPDGQGFSYPYKAVFSTQGPPLASLQDSHFLTDADMVMSFVNLVEHDKEFFHPRYHHREFRFDLSKIPEGEAVTAAEFRIYKDYIRERFDNETFQITVYQVLQEHSGRESDLFLLDSRTIWASEEGWLVFDITATSNHWVVNPRHNLGLQLSVETLDGQSINPKLAGLIGRHGPQNKQPFMVAFFKATEVHLRSIRSTGGKQRSQNRSKTPKNQEALRMASVAENSSSDQRQACKKHELYVSFRDLGWQDWIIAPEGYAAYYCEGECAFPLNSYMNATNHAIVQTLVHFINPDTVPKPCCAPTQLNAISVLYFDDSSNVILKKYRNMVVRACGCH.

An N-terminal signal peptide occupies residues 1–29 (MHVRSLRAAAPHSFVALWAPLFLLRSALA). A propeptide spanning residues 30–291 (DFSLDNEVHS…ATEVHLRSIR (262 aa)) is cleaved from the precursor. N-linked (GlcNAc...) asparagine glycans are attached at residues Asn186, Asn301, Asn320, and Asn371. The segment at 290-310 (IRSTGGKQRSQNRSKTPKNQE) is disordered. 3 disulfides stabilise this stretch: Cys329–Cys395, Cys358–Cys427, and Cys362–Cys429.

This sequence belongs to the TGF-beta family. As to quaternary structure, homodimer; disulfide-linked. Interacts with SOSTDC1. Interacts with TWSG1. Interacts with FBN1 (via N-terminal domain) and FBN2. Interacts with type I receptor ACVR1. Interacts with type II receptor ACVR2A. Interacts with NOG; this interaction inhibits canonical BMP signaling. Interacts with SCUBE3. Interacts with ERFE; the interaction inhibits BMP-induced transcription of HAMP. Interacts with TGFBR3.

The protein resides in the secreted. Its function is as follows. Growth factor of the TGF-beta superfamily that plays important role in various biological processes, including embryogenesis, hematopoiesis, neurogenesis and skeletal morphogenesis. Initiates the canonical BMP signaling cascade by associating with type I receptor ACVR1 and type II receptor ACVR2A. Once all three components are bound together in a complex at the cell surface, ACVR2A phosphorylates and activates ACVR1. In turn, ACVR1 propagates signal by phosphorylating SMAD1/5/8 that travel to the nucleus and act as activators and repressors of transcription of target genes. For specific functions such as growth cone collapse in developing spinal neurons and chemotaxis of monocytes, also uses BMPR2 as type II receptor. Can also signal through non-canonical pathways such as P38 MAP kinase signaling cascade that promotes brown adipocyte differentiation through activation of target genes, including members of the SOX family of transcription factors. Promotes the expression of HAMP, this is repressed by its interaction with ERFE. This Mus musculus (Mouse) protein is Bone morphogenetic protein 7 (Bmp7).